The following is a 140-amino-acid chain: Nucleoside diphosphate kinase (140 aa).

Residues K11, F59, R87, T93, R104, and N114 each coordinate ATP. Residue H117 is the Pros-phosphohistidine intermediate of the active site.

This sequence belongs to the NDK family. As to quaternary structure, homotetramer. Mg(2+) serves as cofactor.

It localises to the cytoplasm. The enzyme catalyses a 2'-deoxyribonucleoside 5'-diphosphate + ATP = a 2'-deoxyribonucleoside 5'-triphosphate + ADP. It carries out the reaction a ribonucleoside 5'-diphosphate + ATP = a ribonucleoside 5'-triphosphate + ADP. Major role in the synthesis of nucleoside triphosphates other than ATP. The ATP gamma phosphate is transferred to the NDP beta phosphate via a ping-pong mechanism, using a phosphorylated active-site intermediate. This Ruegeria pomeroyi (strain ATCC 700808 / DSM 15171 / DSS-3) (Silicibacter pomeroyi) protein is Nucleoside diphosphate kinase.